The following is a 398-amino-acid chain: Acetate kinase (398 aa).

Asparagine 7 contributes to the Mg(2+) binding site. Residue lysine 14 participates in ATP binding. Position 96 (arginine 96) interacts with substrate. Catalysis depends on aspartate 153, which acts as the Proton donor/acceptor. Residues 210–214 (HLGNG), 284–286 (DLR), and 332–336 (GIGEH) contribute to the ATP site. Glutamate 385 is a Mg(2+) binding site.

Belongs to the acetokinase family. As to quaternary structure, homodimer. It depends on Mg(2+) as a cofactor. Mn(2+) is required as a cofactor.

Its subcellular location is the cytoplasm. The enzyme catalyses acetate + ATP = acetyl phosphate + ADP. It participates in metabolic intermediate biosynthesis; acetyl-CoA biosynthesis; acetyl-CoA from acetate: step 1/2. Functionally, catalyzes the formation of acetyl phosphate from acetate and ATP. Can also catalyze the reverse reaction. This is Acetate kinase from Acaryochloris marina (strain MBIC 11017).